The chain runs to 514 residues: Type-2 serine--tRNA ligase (514 aa).

Residue A313 participates in L-serine binding. C315 contacts Zn(2+). R344 contacts L-serine. Residues 344 to 346 and 355 to 356 contribute to the ATP site; these read RWE and RV. 361–363 contacts L-serine; that stretch reads RGE. E363 and C470 together coordinate Zn(2+). Position 477 (R477) interacts with ATP.

It belongs to the class-II aminoacyl-tRNA synthetase family. Type-2 seryl-tRNA synthetase subfamily. As to quaternary structure, homodimer. Zn(2+) is required as a cofactor.

It is found in the cytoplasm. It carries out the reaction tRNA(Ser) + L-serine + ATP = L-seryl-tRNA(Ser) + AMP + diphosphate + H(+). It catalyses the reaction tRNA(Sec) + L-serine + ATP = L-seryl-tRNA(Sec) + AMP + diphosphate + H(+). It functions in the pathway aminoacyl-tRNA biosynthesis; selenocysteinyl-tRNA(Sec) biosynthesis; L-seryl-tRNA(Sec) from L-serine and tRNA(Sec): step 1/1. In terms of biological role, catalyzes the attachment of serine to tRNA(Ser). Is also able to aminoacylate tRNA(Sec) with serine, to form the misacylated tRNA L-seryl-tRNA(Sec), which will be further converted into selenocysteinyl-tRNA(Sec). The protein is Type-2 serine--tRNA ligase of Methanococcus maripaludis (strain C5 / ATCC BAA-1333).